We begin with the raw amino-acid sequence, 520 residues long: Amine oxidase [flavin-containing] B (520 aa).

Serine 2 is modified (N-acetylserine). Topologically, residues 2–489 (SGKCDVVVVG…TFLERHLPSV (488 aa)) are cytoplasmic. Lysine 52 is modified (N6-acetyllysine). Cysteine 397 bears the S-8alpha-FAD cysteine mark. A helical; Anchor for type IV membrane protein membrane pass occupies residues 490-516 (PGLLRLIGLTAIFSATALGVLAHKRGL). Residues 517-520 (LVRV) lie on the Mitochondrial intermembrane side of the membrane.

This sequence belongs to the flavin monoamine oxidase family. As to quaternary structure, monomer, homo- or heterodimer (containing two subunits of similar size). Each subunit contains a covalently bound flavin. Enzymatically active as monomer. It depends on FAD as a cofactor.

It localises to the mitochondrion outer membrane. The catalysed reaction is a secondary aliphatic amine + O2 + H2O = a primary amine + an aldehyde + H2O2. It carries out the reaction (R)-adrenaline + O2 + H2O = (R)-3,4-dihydroxymandelaldehyde + methylamine + H2O2. The enzyme catalyses a primary methyl amine + O2 + H2O = an aldehyde + H2O2 + NH4(+). It catalyses the reaction benzylamine + O2 + H2O = benzaldehyde + H2O2 + NH4(+). The catalysed reaction is dopamine + O2 + H2O = 3,4-dihydroxyphenylacetaldehyde + H2O2 + NH4(+). It carries out the reaction tyramine + O2 + H2O = (4-hydroxyphenyl)acetaldehyde + H2O2 + NH4(+). The enzyme catalyses (R)-noradrenaline + O2 + H2O = (R)-3,4-dihydroxymandelaldehyde + H2O2 + NH4(+). It catalyses the reaction 2-phenylethylamine + O2 + H2O = 2-phenylacetaldehyde + H2O2 + NH4(+). The catalysed reaction is N-acetylputrescine + O2 + H2O = 4-acetamidobutanal + H2O2 + NH4(+). In terms of biological role, catalyzes the oxidative deamination of primary and some secondary amines such as neurotransmitters, and exogenous amines including the tertiary amine, neurotoxin 1-methyl-4-phenyl-1,2,3,6-tetrahydropyridine (MPTP), with concomitant reduction of oxygen to hydrogen peroxide and participates in the metabolism of neuroactive and vasoactive amines in the central nervous system and peripheral tissues. Preferentially degrades benzylamine and phenylethylamine. In Canis lupus familiaris (Dog), this protein is Amine oxidase [flavin-containing] B.